A 91-amino-acid chain; its full sequence is Putative 26S proteasome complex subunit sem-1 (91 aa).

The tract at residues 1-73 (MASTQPKNDA…SWDDDDTSDD (73 aa)) is disordered. Residues 8–28 (NDAKSTEPKPEQPVTEKKTAV) show a composition bias toward basic and acidic residues. Composition is skewed to acidic residues over residues 29-48 (LEEDDEFEDFPVDDWEAEDT) and 63-72 (ESWDDDDTSD).

It belongs to the DSS1/SEM1 family. Part of the 26S proteasome.

Subunit of the 26S proteasome which plays a role in ubiquitin-dependent proteolysis. The chain is Putative 26S proteasome complex subunit sem-1 (sem-1) from Neurospora crassa (strain ATCC 24698 / 74-OR23-1A / CBS 708.71 / DSM 1257 / FGSC 987).